The chain runs to 189 residues: Cytochrome bo(3) ubiquinol oxidase subunit 3 (189 aa).

The Cytoplasmic segment spans residues 1–10 (MIKETMRNNK). Residues 11 to 31 (LFGLWIYLMSDCIIFAVLFAV) form a helical membrane-spanning segment. At 32 to 52 (YAIISSNFSTNLINHKIFNLS) the chain is on the extracellular side. Residues 53-73 (YVFLETLILLLSSLSSGMLTI) form a helical membrane-spanning segment. Residues 74–81 (QKNKNNIK) lie on the Cytoplasmic side of the membrane. A helical membrane pass occupies residues 82–102 (IIYFYLLLTFFLGLSFLLMEV). Residues 103 to 122 (NEFYKLILENCSPSQHAFFS) lie on the Extracellular side of the membrane. The chain crosses the membrane as a helical span at residues 123 to 143 (IFFTIVGVHGIHVFFGLIFIL). Residues 144-161 (SILYQLFYLGITNTIRIR) lie on the Cytoplasmic side of the membrane. Residues 162 to 182 (ILCFSLFWHFLDIIWICVFTF) form a helical membrane-spanning segment. Residues 183–189 (VYLNGVI) lie on the Extracellular side of the membrane.

The protein belongs to the cytochrome c oxidase subunit 3 family. Heterooctamer of two A chains, two B chains, two C chains and two D chains.

The protein localises to the cell membrane. Its function is as follows. Cytochrome bo(3) ubiquinol terminal oxidase is the component of the aerobic respiratory chain of E.coli that predominates when cells are grown at high aeration. Has proton pump activity across the membrane in addition to electron transfer, pumping 2 protons/electron. In Buchnera aphidicola subsp. Schizaphis graminum (strain Sg), this protein is Cytochrome bo(3) ubiquinol oxidase subunit 3 (cyoC).